Consider the following 139-residue polypeptide: Two-component response regulator 24 (139 aa).

Positions 19 to 134 (TALVVDDSFV…KLLSILHKLN (116 aa)) constitute a Response regulatory domain. 4-aspartylphosphate is present on Asp-69.

Belongs to the ARR family. Type-A subfamily. Two-component system major event consists of a His-to-Asp phosphorelay between a sensor histidine kinase (HK) and a response regulator (RR). In plants, the His-to-Asp phosphorelay involves an additional intermediate named Histidine-containing phosphotransfer protein (HPt). This multistep phosphorelay consists of a His-Asp-His-Asp sequential transfer of a phosphate group between first a His and an Asp of the HK protein, followed by the transfer to a conserved His of the HPt protein and finally the transfer to an Asp in the receiver domain of the RR protein. In terms of tissue distribution, mostly expressed in flowers and siliques, primarily restricted to pollen grains.

It localises to the nucleus. Its function is as follows. Functions as a response regulator involved in His-to-Asp phosphorelay signal transduction system. Phosphorylation of the Asp residue in the receiver domain activates the ability of the protein to promote the transcription of target genes. Type-A response regulators seem to act as negative regulators of the cytokinin signaling. This chain is Two-component response regulator 24, found in Arabidopsis thaliana (Mouse-ear cress).